The chain runs to 500 residues: Cytochrome P450 monooxygenase 103 (500 aa).

Helical transmembrane passes span 1–21 (MAST…YLLR) and 26–46 (PLYA…IGAL). A glycan (N-linked (GlcNAc...) asparagine) is linked at asparagine 374. Cysteine 441 is a heme binding site.

It belongs to the cytochrome P450 family. Heme serves as cofactor.

It is found in the membrane. It participates in secondary metabolite biosynthesis. Cytochrome P450 monooxygenase that is able to use testosterone as a substrate for oxidation. The sequence is that of Cytochrome P450 monooxygenase 103 from Postia placenta (strain ATCC 44394 / Madison 698-R) (Brown rot fungus).